The following is a 122-amino-acid chain: Large ribosomal subunit protein uL14 (122 aa).

The protein belongs to the universal ribosomal protein uL14 family. Part of the 50S ribosomal subunit. Forms a cluster with proteins L3 and L19. In the 70S ribosome, L14 and L19 interact and together make contacts with the 16S rRNA in bridges B5 and B8.

In terms of biological role, binds to 23S rRNA. Forms part of two intersubunit bridges in the 70S ribosome. The chain is Large ribosomal subunit protein uL14 from Solidesulfovibrio magneticus (strain ATCC 700980 / DSM 13731 / RS-1) (Desulfovibrio magneticus).